Reading from the N-terminus, the 734-residue chain is Sulfate transporter (734 aa).

Polar residues predominate over residues 1-11; sequence MSLKNGEQNDL. Residues 1-38 form a disordered region; sequence MSLKNGEQNDLSPKDSVKGNDQYRSPSGIHVEHEEESR. Phosphoserine occurs at positions 12 and 16. 2 helical membrane passes run 113-133 and 138-158; these read MMSG…YSLL and PIYG…LGTS. N-linked (GlcNAc...) asparagine glycosylation is found at Asn-194 and Asn-204. A run of 8 helical transmembrane segments spans residues 222–242, 247–267, 269–289, 292–312, 379–399, 415–435, 453–473, and 519–539; these read FVAG…VSVY, LLGG…VKYL, GLSL…IHIF, IHKT…VLLP, VDAI…SEMF, AIGF…SAAL, VMTA…FFSL, and LIST…CVIL. Positions 563–714 constitute an STAS domain; it reads AYKNLQAKSG…YSVYEAMTFA (152 aa).

The protein belongs to the SLC26A/SulP transporter (TC 2.A.53) family. Post-translationally, N-glycosylated.

Its subcellular location is the cell membrane. It localises to the apical cell membrane. The enzyme catalyses oxalate(in) + sulfate(out) = oxalate(out) + sulfate(in). The catalysed reaction is sulfate(out) + 2 chloride(in) = sulfate(in) + 2 chloride(out). It catalyses the reaction oxalate(out) + 2 chloride(in) = oxalate(in) + 2 chloride(out). It carries out the reaction bromide(in) + chloride(out) = bromide(out) + chloride(in). The enzyme catalyses nitrate(in) + chloride(out) = nitrate(out) + chloride(in). The catalysed reaction is iodide(in) + chloride(out) = iodide(out) + chloride(in). Sulfate transporter which mediates sulfate uptake into chondrocytes in order to maintain adequate sulfation of proteoglycans which is needed for cartilage development. Mediates electroneutral anion exchange of sulfate ions for oxalate ions, sulfate and oxalate ions for chloride and/or hydroxyl ions and chloride ions for bromide, iodide and nitrate ions. The coupling of sulfate transport to both hydroxyl and chloride ions likely serves to ensure transport at both acidic pH when most sulfate uptake is mediated by sulfate-hydroxide exchange and alkaline pH when most sulfate uptake is mediated by sulfate-chloride exchange. Essential for chondrocyte proliferation, differentiation and cell size expansion. The sequence is that of Sulfate transporter (SLC26A2) from Ovis aries (Sheep).